The sequence spans 156 residues: Putative HTH-type transcriptional regulator BadM (156 aa).

Residues 4 to 130 (RLQKSTMCGL…RSVSITSLLK (127 aa)) form the HTH rrf2-type domain. The segment at 136–156 (RRKTERGPNGASARHSSAGRA) is disordered. Residues 145-156 (GASARHSSAGRA) are compositionally biased toward low complexity.

In Rhodopseudomonas palustris (strain ATCC BAA-98 / CGA009), this protein is Putative HTH-type transcriptional regulator BadM (badM).